A 453-amino-acid polypeptide reads, in one-letter code: Allantoinase (453 aa).

Zn(2+)-binding residues include His-59, His-61, Lys-146, His-186, His-242, and Asp-315. Lys-146 carries the N6-carboxylysine modification.

The protein belongs to the metallo-dependent hydrolases superfamily. Allantoinase family. Homotetramer. Zn(2+) serves as cofactor. In terms of processing, carboxylation allows a single lysine to coordinate two zinc ions.

The catalysed reaction is (S)-allantoin + H2O = allantoate + H(+). It participates in nitrogen metabolism; (S)-allantoin degradation; allantoate from (S)-allantoin: step 1/1. Catalyzes the conversion of allantoin (5-ureidohydantoin) to allantoic acid by hydrolytic cleavage of the five-member hydantoin ring. This is Allantoinase from Escherichia coli (strain SMS-3-5 / SECEC).